Here is a 101-residue protein sequence, read N- to C-terminus: Putative pterin-4-alpha-carbinolamine dehydratase (101 aa).

Belongs to the pterin-4-alpha-carbinolamine dehydratase family.

The catalysed reaction is (4aS,6R)-4a-hydroxy-L-erythro-5,6,7,8-tetrahydrobiopterin = (6R)-L-erythro-6,7-dihydrobiopterin + H2O. This is Putative pterin-4-alpha-carbinolamine dehydratase from Rhizobium etli (strain ATCC 51251 / DSM 11541 / JCM 21823 / NBRC 15573 / CFN 42).